The sequence spans 433 residues: Enolase (433 aa).

Ser-1 is subject to N-acetylserine. (2R)-2-phosphoglycerate is bound by residues Ser-36 and His-157. The active-site Proton donor is the Glu-209. 3 residues coordinate Mn(2+): Asp-244, Glu-294, and Asp-319. Positions 344, 373, and 374 each coordinate (2R)-2-phosphoglycerate. Lys-344 functions as the Proton acceptor in the catalytic mechanism.

The protein belongs to the enolase family. As to quaternary structure, homodimer. The cofactor is Mg(2+).

It is found in the cytoplasm. The catalysed reaction is (2R)-2-phosphoglycerate = phosphoenolpyruvate + H2O. It functions in the pathway carbohydrate degradation; glycolysis; pyruvate from D-glyceraldehyde 3-phosphate: step 4/5. With respect to regulation, inhibited by 2-phosphoglycolic acid. The chain is Enolase from Homarus gammarus (European lobster).